The primary structure comprises 455 residues: Alcohol acyl transferase 1 allele RGb (455 aa).

Residues His-164 and Asn-385 each act as proton acceptor in the active site.

It belongs to the plant acyltransferase family.

Involved in the biosynthesis of volatile esters which confer ripe apple fruit flavor. Alcohol acyl transferase that can use a wide range of alcohols as substrate to produce esters. The chain is Alcohol acyl transferase 1 allele RGb from Malus domestica (Apple).